Reading from the N-terminus, the 417-residue chain is Serine hydroxymethyltransferase (417 aa).

(6S)-5,6,7,8-tetrahydrofolate contacts are provided by residues leucine 121 and glycine 125–leucine 127. Lysine 229 is modified (N6-(pyridoxal phosphate)lysine). Serine 355–phenylalanine 357 lines the (6S)-5,6,7,8-tetrahydrofolate pocket.

It belongs to the SHMT family. As to quaternary structure, homodimer. Requires pyridoxal 5'-phosphate as cofactor.

The protein localises to the cytoplasm. The enzyme catalyses (6R)-5,10-methylene-5,6,7,8-tetrahydrofolate + glycine + H2O = (6S)-5,6,7,8-tetrahydrofolate + L-serine. The protein operates within one-carbon metabolism; tetrahydrofolate interconversion. It participates in amino-acid biosynthesis; glycine biosynthesis; glycine from L-serine: step 1/1. In terms of biological role, catalyzes the reversible interconversion of serine and glycine with tetrahydrofolate (THF) serving as the one-carbon carrier. This reaction serves as the major source of one-carbon groups required for the biosynthesis of purines, thymidylate, methionine, and other important biomolecules. Also exhibits THF-independent aldolase activity toward beta-hydroxyamino acids, producing glycine and aldehydes, via a retro-aldol mechanism. In Proteus mirabilis (strain HI4320), this protein is Serine hydroxymethyltransferase.